The sequence spans 249 residues: Uridylate kinase (249 aa).

ATP is bound at residue 19 to 22; that stretch reads KLSG. Glycine 61 contributes to the UMP binding site. Positions 62 and 66 each coordinate ATP. UMP-binding positions include aspartate 81 and 142–149; that span reads TGNPYFTT. ATP contacts are provided by threonine 169, tyrosine 175, and aspartate 178.

The protein belongs to the UMP kinase family. As to quaternary structure, homohexamer.

It localises to the cytoplasm. It catalyses the reaction UMP + ATP = UDP + ADP. The protein operates within pyrimidine metabolism; CTP biosynthesis via de novo pathway; UDP from UMP (UMPK route): step 1/1. With respect to regulation, inhibited by UTP. Catalyzes the reversible phosphorylation of UMP to UDP. In Anaeromyxobacter sp. (strain Fw109-5), this protein is Uridylate kinase.